We begin with the raw amino-acid sequence, 1053 residues long: Translation initiation factor IF-2 (1053 aa).

The span at 1-20 shows a compositional bias: polar residues; that stretch reads MSESKNSGENTLSVTPTKTL. Positions 1–442 are disordered; the sequence is MSESKNSGEN…TATGGEEEER (442 aa). Composition is skewed to low complexity over residues 64-76 and 83-102; these read EAAP…ATVT and RPAA…AAVP. Pro residues-rich tracts occupy residues 131-141 and 150-161; these read PAQPKAEPVPA and APVPPVPAPSAP. The segment covering 178–220 has biased composition (low complexity); that stretch reads PVSQAKPIQTAPVQTAPAAQASASQTTGPRPVAAGPRPATGAA. A compositionally biased stretch (gly residues) spans 255–264; the sequence is GGRGGPGRGE. 2 stretches are compositionally biased toward basic and acidic residues: residues 279–288 and 295–353; these read LTDEEREARA and RIRE…EAKR. A compositionally biased stretch (low complexity) spans 375–386; that stretch reads TATAAAPAAAAP. The tr-type G domain occupies 550-720; that stretch reads PRPPVVTIMG…ALQAELLDLK (171 aa). The segment at 559–566 is G1; it reads GHVDHGKT. 559 to 566 contacts GTP; it reads GHVDHGKT. Residues 584–588 form a G2 region; it reads GITQH. The interval 606–609 is G3; sequence DTPG. Residues 606–610 and 660–663 each bind GTP; these read DTPGH and NKID. Residues 660–663 are G4; sequence NKID. Residues 696-698 are G5; it reads SAT.

Belongs to the TRAFAC class translation factor GTPase superfamily. Classic translation factor GTPase family. IF-2 subfamily.

The protein resides in the cytoplasm. One of the essential components for the initiation of protein synthesis. Protects formylmethionyl-tRNA from spontaneous hydrolysis and promotes its binding to the 30S ribosomal subunits. Also involved in the hydrolysis of GTP during the formation of the 70S ribosomal complex. In Beijerinckia indica subsp. indica (strain ATCC 9039 / DSM 1715 / NCIMB 8712), this protein is Translation initiation factor IF-2.